The following is a 143-amino-acid chain: Transcriptional regulator MraZ (143 aa).

SpoVT-AbrB domains follow at residues 5–47 and 76–119; these read TYTP…PREE and TDEQ…DAQA.

It belongs to the MraZ family. Forms oligomers.

Its subcellular location is the cytoplasm. The protein localises to the nucleoid. In Rhodococcus jostii (strain RHA1), this protein is Transcriptional regulator MraZ.